The following is a 168-amino-acid chain: ATP synthase subunit b (168 aa).

Residues 9-29 (LFNLSTFVFTIINLLVLYYIL) traverse the membrane as a helical segment.

This sequence belongs to the ATPase B chain family. As to quaternary structure, F-type ATPases have 2 components, F(1) - the catalytic core - and F(0) - the membrane proton channel. F(1) has five subunits: alpha(3), beta(3), gamma(1), delta(1), epsilon(1). F(0) has three main subunits: a(1), b(2) and c(10-14). The alpha and beta chains form an alternating ring which encloses part of the gamma chain. F(1) is attached to F(0) by a central stalk formed by the gamma and epsilon chains, while a peripheral stalk is formed by the delta and b chains.

It localises to the cell membrane. Functionally, f(1)F(0) ATP synthase produces ATP from ADP in the presence of a proton or sodium gradient. F-type ATPases consist of two structural domains, F(1) containing the extramembraneous catalytic core and F(0) containing the membrane proton channel, linked together by a central stalk and a peripheral stalk. During catalysis, ATP synthesis in the catalytic domain of F(1) is coupled via a rotary mechanism of the central stalk subunits to proton translocation. Its function is as follows. Component of the F(0) channel, it forms part of the peripheral stalk, linking F(1) to F(0). This chain is ATP synthase subunit b, found in Caldanaerobacter subterraneus subsp. tengcongensis (strain DSM 15242 / JCM 11007 / NBRC 100824 / MB4) (Thermoanaerobacter tengcongensis).